We begin with the raw amino-acid sequence, 227 residues long: Cytochrome c oxidase subunit 2 (227 aa).

Topologically, residues 1–14 are mitochondrial intermembrane; sequence MAYPFQLGLQDATS. A helical transmembrane segment spans residues 15 to 45; it reads PIMEELLHFHDHTLMIVFLISSLVLYIITLM. Topologically, residues 46–59 are mitochondrial matrix; the sequence is LTTKLTHTSTMDAQ. The chain crosses the membrane as a helical span at residues 60–87; sequence EVETVWTILPAIILVLIALPSLRILYMM. The Mitochondrial intermembrane segment spans residues 88–227; sequence DEINNPSLTV…YFETWSALMV (140 aa). Cu cation contacts are provided by histidine 161, cysteine 196, glutamate 198, cysteine 200, histidine 204, and methionine 207. Mg(2+) is bound at residue glutamate 198. Tyrosine 218 carries the post-translational modification Phosphotyrosine.

This sequence belongs to the cytochrome c oxidase subunit 2 family. Component of the cytochrome c oxidase (complex IV, CIV), a multisubunit enzyme composed of 14 subunits. The complex is composed of a catalytic core of 3 subunits MT-CO1, MT-CO2 and MT-CO3, encoded in the mitochondrial DNA, and 11 supernumerary subunits COX4I, COX5A, COX5B, COX6A, COX6B, COX6C, COX7A, COX7B, COX7C, COX8 and NDUFA4, which are encoded in the nuclear genome. The complex exists as a monomer or a dimer and forms supercomplexes (SCs) in the inner mitochondrial membrane with NADH-ubiquinone oxidoreductase (complex I, CI) and ubiquinol-cytochrome c oxidoreductase (cytochrome b-c1 complex, complex III, CIII), resulting in different assemblies (supercomplex SCI(1)III(2)IV(1) and megacomplex MCI(2)III(2)IV(2)). Found in a complex with TMEM177, COA6, COX18, COX20, SCO1 and SCO2. Interacts with TMEM177 in a COX20-dependent manner. Interacts with COX20. Interacts with COX16. It depends on Cu cation as a cofactor.

The protein localises to the mitochondrion inner membrane. The catalysed reaction is 4 Fe(II)-[cytochrome c] + O2 + 8 H(+)(in) = 4 Fe(III)-[cytochrome c] + 2 H2O + 4 H(+)(out). In terms of biological role, component of the cytochrome c oxidase, the last enzyme in the mitochondrial electron transport chain which drives oxidative phosphorylation. The respiratory chain contains 3 multisubunit complexes succinate dehydrogenase (complex II, CII), ubiquinol-cytochrome c oxidoreductase (cytochrome b-c1 complex, complex III, CIII) and cytochrome c oxidase (complex IV, CIV), that cooperate to transfer electrons derived from NADH and succinate to molecular oxygen, creating an electrochemical gradient over the inner membrane that drives transmembrane transport and the ATP synthase. Cytochrome c oxidase is the component of the respiratory chain that catalyzes the reduction of oxygen to water. Electrons originating from reduced cytochrome c in the intermembrane space (IMS) are transferred via the dinuclear copper A center (CU(A)) of subunit 2 and heme A of subunit 1 to the active site in subunit 1, a binuclear center (BNC) formed by heme A3 and copper B (CU(B)). The BNC reduces molecular oxygen to 2 water molecules using 4 electrons from cytochrome c in the IMS and 4 protons from the mitochondrial matrix. This Vulpes zerda (Fennec fox) protein is Cytochrome c oxidase subunit 2 (MT-CO2).